Consider the following 183-residue polypeptide: ATP synthase subunit b, chloroplastic (183 aa).

Residues 20-42 (INTNVFETNIINLAIVVGTLFYY) traverse the membrane as a helical segment.

This sequence belongs to the ATPase B chain family. F-type ATPases have 2 components, F(1) - the catalytic core - and F(0) - the membrane proton channel. F(1) has five subunits: alpha(3), beta(3), gamma(1), delta(1), epsilon(1). F(0) has four main subunits: a(1), b(1), b'(1) and c(10-14). The alpha and beta chains form an alternating ring which encloses part of the gamma chain. F(1) is attached to F(0) by a central stalk formed by the gamma and epsilon chains, while a peripheral stalk is formed by the delta, b and b' chains.

It localises to the plastid. The protein resides in the chloroplast thylakoid membrane. Functionally, f(1)F(0) ATP synthase produces ATP from ADP in the presence of a proton or sodium gradient. F-type ATPases consist of two structural domains, F(1) containing the extramembraneous catalytic core and F(0) containing the membrane proton channel, linked together by a central stalk and a peripheral stalk. During catalysis, ATP synthesis in the catalytic domain of F(1) is coupled via a rotary mechanism of the central stalk subunits to proton translocation. Its function is as follows. Component of the F(0) channel, it forms part of the peripheral stalk, linking F(1) to F(0). The protein is ATP synthase subunit b, chloroplastic of Euglena gracilis.